Consider the following 736-residue polypeptide: Krev interaction trapped protein 1 (736 aa).

The N-terminal domain similar to Nudix hydrolase domain stretch occupies residues 1-170 (MGNPENIEDA…DKWLDERHAQ (170 aa)). Residues 172–195 (HFIPALFRPSPLERIKTNVINPAY) form an interaction with ITGB1BP1 region. ANK repeat units lie at residues 287-316 (VDDF…SVNQ), 320-350 (DHWA…NPNL), 354-383 (QLSS…TDRH), and 388-419 (QGRS…NKPY). The 315-residue stretch at 420–734 (EKVRIYRMDG…LNGQLMPTER (315 aa)) folds into the FERM domain. The interval 430 to 452 (SYRSVELKHGNNTTVQQIMEGMR) is interaction with RAP1B.

Interacts with CDH5. Found in a complex, at least composed of ITGB1BP1, KRIT1 and RAP1A. Interacts (via C-terminus FERM domain) with RAP1A (active GTP-bound form preferentially); the interaction does not induce the opening conformation of KRIT1. Interacts (via FERM domain) with RAP1B. Interacts (via N-terminus NPXY motif) with ITGB1BP1; the interaction induces the opening conformation of KRIT1 and competes with ITGB1 for ITGB1BP1 interaction. Interacts with HEG1 and CCM2; greatly facilitates CCM2-binding to HEG1. Associates (via N-terminus and C-terminus regions) with microtubules; the interaction is inhibited in presence of ITGB1BP1 and active GTP-bound RAP1A. Low levels in brain. Very weak expression found in heart and muscle.

Its subcellular location is the cytoplasm. The protein resides in the cytoskeleton. It localises to the cell membrane. The protein localises to the cell junction. Functionally, component of the CCM signaling pathway which is a crucial regulator of heart and vessel formation and integrity. Negative regulator of angiogenesis. Inhibits endothelial proliferation, apoptosis, migration, lumen formation and sprouting angiogenesis in primary endothelial cells. Promotes AKT phosphorylation in a NOTCH-dependent and independent manner, and inhibits ERK1/2 phosphorylation indirectly through activation of the DELTA-NOTCH cascade. Acts in concert with CDH5 to establish and maintain correct endothelial cell polarity and vascular lumen and these effects are mediated by recruitment and activation of the Par polarity complex and RAP1B. Required for the localization of phosphorylated PRKCZ, PARD3, TIAM1 and RAP1B to the cell junction, and cell junction stabilization. Plays a role in integrin signaling via its interaction with ITGB1BP1; this prevents the interaction between ITGB1 and ITGB1BP1. Microtubule-associated protein that binds to phosphatidylinositol 4,5-bisphosphate (PIP2)-containing membranes in a GTP-bound RAP1-dependent manner. Plays an important role in the maintenance of the intracellular reactive oxygen species (ROS) homeostasis to prevent oxidative cellular damage. Regulates the homeostasis of intracellular ROS through an antioxidant pathway involving FOXO1 and SOD2. Facilitates the down-regulation of cyclin-D1 (CCND1) levels required for cell transition from proliferative growth to quiescence by preventing the accumulation of intracellular ROS through the modulation of FOXO1 and SOD2 levels. May play a role in the regulation of macroautophagy through the down-regulation of the mTOR pathway. The polypeptide is Krev interaction trapped protein 1 (KRIT1) (Homo sapiens (Human)).